The chain runs to 764 residues: Aconitate hydratase (764 aa).

75–77 (DSH) lines the substrate pocket. Residues cysteine 307, cysteine 372, and cysteine 375 each coordinate [4Fe-4S] cluster. Substrate contacts are provided by residues arginine 405, arginine 410, arginine 568, and 648-649 (SR).

This sequence belongs to the aconitase/IPM isomerase family. [4Fe-4S] cluster serves as cofactor.

The protein localises to the cytoplasm. It catalyses the reaction citrate = D-threo-isocitrate. It functions in the pathway carbohydrate metabolism; glyoxylate and dicarboxylate metabolism. Functionally, catalyzes the isomerization of citrate to isocitrate via cis-aconitate. This Cucumis melo var. conomon (Oriental pickling melon) protein is Aconitate hydratase (ACO).